A 199-amino-acid polypeptide reads, in one-letter code: NADH-quinone oxidoreductase subunit C (199 aa).

Belongs to the complex I 30 kDa subunit family. In terms of assembly, NDH-1 is composed of 14 different subunits. Subunits NuoB, C, D, E, F, and G constitute the peripheral sector of the complex.

Its subcellular location is the cell inner membrane. It catalyses the reaction a quinone + NADH + 5 H(+)(in) = a quinol + NAD(+) + 4 H(+)(out). Its function is as follows. NDH-1 shuttles electrons from NADH, via FMN and iron-sulfur (Fe-S) centers, to quinones in the respiratory chain. The immediate electron acceptor for the enzyme in this species is believed to be ubiquinone. Couples the redox reaction to proton translocation (for every two electrons transferred, four hydrogen ions are translocated across the cytoplasmic membrane), and thus conserves the redox energy in a proton gradient. In Cupriavidus taiwanensis (strain DSM 17343 / BCRC 17206 / CCUG 44338 / CIP 107171 / LMG 19424 / R1) (Ralstonia taiwanensis (strain LMG 19424)), this protein is NADH-quinone oxidoreductase subunit C.